A 58-amino-acid chain; its full sequence is Metallothionein (58 aa).

The tract at residues 1-29 (PDPCCAEGTCECEEGKCKAGCKCTSCRCS) is beta. Residues C4, C5, C10, C12, C17, C21, C23, C26, C28, C31, C34, C38, C40, C46, C50, C54, C56, and C57 each contribute to the a divalent metal cation site. The interval 30–58 (PCEKCTSECECKSKEECAKNCTKPCSCCP) is alpha.

Functionally, metallothioneins have a high content of cysteine residues that bind various heavy metals. Class I MTS in crustacea are involved in the sequestration of elevated levels of heavy-metal ions. The polypeptide is Metallothionein (Potamon potamios).